The primary structure comprises 476 residues: uncharacterized protein (476 aa).

The LisH domain maps to 7–39 (SRFYTNLLIANYLKHNGLEDTLAAFIRETALPL).

This is an uncharacterized protein from Saccharomyces cerevisiae (strain ATCC 204508 / S288c) (Baker's yeast).